Consider the following 880-residue polypeptide: Leucine--tRNA ligase (880 aa).

Positions 46–56 (PYPSGALHMGH) match the 'HIGH' region motif. The short motif at 638–642 (KMSKS) is the 'KMSKS' region element. Lys641 contributes to the ATP binding site.

Belongs to the class-I aminoacyl-tRNA synthetase family.

The protein localises to the cytoplasm. The enzyme catalyses tRNA(Leu) + L-leucine + ATP = L-leucyl-tRNA(Leu) + AMP + diphosphate. This is Leucine--tRNA ligase from Xanthomonas euvesicatoria pv. vesicatoria (strain 85-10) (Xanthomonas campestris pv. vesicatoria).